We begin with the raw amino-acid sequence, 641 residues long: 1-deoxy-D-xylulose-5-phosphate synthase (641 aa).

Thiamine diphosphate is bound by residues His-71 and 112–114 (SHA). Asp-144 serves as a coordination point for Mg(2+). Thiamine diphosphate-binding positions include 145–146 (GA), Asn-173, Tyr-284, and Glu-365. A Mg(2+)-binding site is contributed by Asn-173.

The protein belongs to the transketolase family. DXPS subfamily. As to quaternary structure, homodimer. Mg(2+) is required as a cofactor. Thiamine diphosphate serves as cofactor.

It catalyses the reaction D-glyceraldehyde 3-phosphate + pyruvate + H(+) = 1-deoxy-D-xylulose 5-phosphate + CO2. It functions in the pathway metabolic intermediate biosynthesis; 1-deoxy-D-xylulose 5-phosphate biosynthesis; 1-deoxy-D-xylulose 5-phosphate from D-glyceraldehyde 3-phosphate and pyruvate: step 1/1. Catalyzes the acyloin condensation reaction between C atoms 2 and 3 of pyruvate and glyceraldehyde 3-phosphate to yield 1-deoxy-D-xylulose-5-phosphate (DXP). The protein is 1-deoxy-D-xylulose-5-phosphate synthase of Mycobacterium avium (strain 104).